Reading from the N-terminus, the 382-residue chain is Queuine tRNA-ribosyltransferase (382 aa).

Catalysis depends on D96, which acts as the Proton acceptor. Residues 96–100 (DSGGF), D151, Q194, and G221 contribute to the substrate site. Residues 252–258 (GVGAPDS) are RNA binding. D271 (nucleophile) is an active-site residue. Positions 276–280 (TRIAR) are RNA binding; important for wobble base 34 recognition. The Zn(2+) site is built by C309, C311, C314, and H340.

Belongs to the queuine tRNA-ribosyltransferase family. In terms of assembly, homodimer. Within each dimer, one monomer is responsible for RNA recognition and catalysis, while the other monomer binds to the replacement base PreQ1. Zn(2+) serves as cofactor.

The catalysed reaction is 7-aminomethyl-7-carbaguanine + guanosine(34) in tRNA = 7-aminomethyl-7-carbaguanosine(34) in tRNA + guanine. Its pathway is tRNA modification; tRNA-queuosine biosynthesis. In terms of biological role, catalyzes the base-exchange of a guanine (G) residue with the queuine precursor 7-aminomethyl-7-deazaguanine (PreQ1) at position 34 (anticodon wobble position) in tRNAs with GU(N) anticodons (tRNA-Asp, -Asn, -His and -Tyr). Catalysis occurs through a double-displacement mechanism. The nucleophile active site attacks the C1' of nucleotide 34 to detach the guanine base from the RNA, forming a covalent enzyme-RNA intermediate. The proton acceptor active site deprotonates the incoming PreQ1, allowing a nucleophilic attack on the C1' of the ribose to form the product. After dissociation, two additional enzymatic reactions on the tRNA convert PreQ1 to queuine (Q), resulting in the hypermodified nucleoside queuosine (7-(((4,5-cis-dihydroxy-2-cyclopenten-1-yl)amino)methyl)-7-deazaguanosine). This is Queuine tRNA-ribosyltransferase from Lactococcus lactis subsp. cremoris (strain SK11).